Reading from the N-terminus, the 351-residue chain is Cysteine-rich receptor-like protein kinase 45 (351 aa).

The 251-residue stretch at 37–287 folds into the Protein kinase domain; sequence NDFSELVGRG…EILRYIHIAL (251 aa). Residues 43–51 and Lys65 contribute to the ATP site; that span reads VGRGGFGFV. The residue at position 110 (Tyr110) is a Phosphotyrosine. The Proton acceptor role is filled by Asp162. 2 positions are modified to phosphothreonine: Thr197 and Thr202. Tyr210 is subject to Phosphotyrosine.

It belongs to the protein kinase superfamily. Ser/Thr protein kinase family. CRK subfamily. As to quaternary structure, interacts with CRK36. Post-translationally, autophosphorylated and phosphorylated by CRK36.

The protein resides in the cytoplasm. The protein localises to the cytosol. The catalysed reaction is L-seryl-[protein] + ATP = O-phospho-L-seryl-[protein] + ADP + H(+). The enzyme catalyses L-threonyl-[protein] + ATP = O-phospho-L-threonyl-[protein] + ADP + H(+). Forms a complex with CRK36 that may negatively control abscisic acid (ABA) and osmotic stress signal transduction. Involved in plant response to ABA during seed germination, early seedling growth and responses to abiotic stresses by inducing the expression of ABA-responsive genes and stress-inducible genes. Acts as a positive regulator in disease resistance, downstream of NPR1 and WRKY70. This is Cysteine-rich receptor-like protein kinase 45 from Arabidopsis thaliana (Mouse-ear cress).